The following is a 205-amino-acid chain: Probable 3'-5' exonuclease KapD (205 aa).

The Exonuclease domain maps to 6-173; it reads LLIIDFEFTM…DDALTAYKLF (168 aa). Residues Asp10, Glu12, and Asp104 each coordinate Mg(2+). Glu12 functions as the Proton acceptor in the catalytic mechanism. Residue Glu12 coordinates AMP. His160 serves as the catalytic Proton acceptor. Position 160 (His160) interacts with AMP. Asp165 provides a ligand contact to Mg(2+).

Mg(2+) is required as a cofactor.

Its function is as follows. Specifically inhibits the KinA pathway to sporulation. The protein is Probable 3'-5' exonuclease KapD (kapD) of Bacillus subtilis (strain 168).